We begin with the raw amino-acid sequence, 68 residues long: Putative membrane protein insertion efficiency factor (68 aa).

The protein belongs to the UPF0161 family.

It is found in the cell inner membrane. Its function is as follows. Could be involved in insertion of integral membrane proteins into the membrane. In Aquifex aeolicus (strain VF5), this protein is Putative membrane protein insertion efficiency factor.